We begin with the raw amino-acid sequence, 278 residues long: Large ribosomal subunit protein uL2 (278 aa).

The tract at residues 212–278 is disordered; that stretch reads NRHRGIRPQT…IISRKKHKKG (67 aa). Residues 257-278 are compositionally biased toward basic residues; the sequence is YKTRKKKASDKLIISRKKHKKG.

It belongs to the universal ribosomal protein uL2 family. As to quaternary structure, part of the 50S ribosomal subunit. Forms a bridge to the 30S subunit in the 70S ribosome.

One of the primary rRNA binding proteins. Required for association of the 30S and 50S subunits to form the 70S ribosome, for tRNA binding and peptide bond formation. It has been suggested to have peptidyltransferase activity; this is somewhat controversial. Makes several contacts with the 16S rRNA in the 70S ribosome. In Helicobacter pylori (strain Shi470), this protein is Large ribosomal subunit protein uL2.